The chain runs to 308 residues: HTH-type transcriptional regulator SsuR (308 aa).

Residues 1 to 59 (MNFQQLRFVREAVRQNMNLTEVANVLYTSQSGVSKQIKDLEDELGVDIFIRRGKRLTGL) form the HTH lysR-type domain. Residues 19–38 (LTEVANVLYTSQSGVSKQIK) constitute a DNA-binding region (H-T-H motif).

It belongs to the LysR transcriptional regulatory family.

Transcriptional regulator that is essential for the utilization of a number of organic sulfur sources of either environmental or human origin. Required for aliphatic sulfonate utilization. Binds to DNA at target promoter regions. Targets include the ssuDBC operon, the tauABC operon, three tauD-type genes and atsA. This is HTH-type transcriptional regulator SsuR from Burkholderia cenocepacia (strain ATCC BAA-245 / DSM 16553 / LMG 16656 / NCTC 13227 / J2315 / CF5610) (Burkholderia cepacia (strain J2315)).